The chain runs to 404 residues: Druantia protein DruA (404 aa).

The protein resides in the cytoplasm. Component of antiviral defense system Druantia type I, composed of DruA, DruB, DruC, DruD and DruE. Expression of Druantia in E.coli (strain MG1655) confers resistance to phage lambda, SECphi18, SECphi27 and T4. The sequence is that of Druantia protein DruA from Escherichia coli (strain UMEA 4076-1).